Consider the following 358-residue polypeptide: 3-dehydroquinate synthase (358 aa).

NAD(+)-binding positions include 102–106 (GVVGD), 126–127 (TT), Lys138, and Lys147. Positions 180, 243, and 260 each coordinate Zn(2+).

This sequence belongs to the sugar phosphate cyclases superfamily. Dehydroquinate synthase family. Requires Co(2+) as cofactor. The cofactor is Zn(2+). NAD(+) is required as a cofactor.

The protein localises to the cytoplasm. The catalysed reaction is 7-phospho-2-dehydro-3-deoxy-D-arabino-heptonate = 3-dehydroquinate + phosphate. Its pathway is metabolic intermediate biosynthesis; chorismate biosynthesis; chorismate from D-erythrose 4-phosphate and phosphoenolpyruvate: step 2/7. In terms of biological role, catalyzes the conversion of 3-deoxy-D-arabino-heptulosonate 7-phosphate (DAHP) to dehydroquinate (DHQ). The chain is 3-dehydroquinate synthase from Shouchella clausii (strain KSM-K16) (Alkalihalobacillus clausii).